We begin with the raw amino-acid sequence, 128 residues long: uncharacterized protein (128 aa).

Positions 1 to 50 (MSNEQGKGMGFFGNKGKPASEKKDEKKTKLDLDYKPDLNPSTPYDPTLPV) are disordered. Residues 18–36 (PASEKKDEKKTKLDLDYKP) show a composition bias toward basic and acidic residues.

This is an uncharacterized protein from Bacillus anthracis.